The primary structure comprises 184 residues: Tumor necrosis factor receptor superfamily member 17 (184 aa).

Residues 1 to 54 are Extracellular-facing; the sequence is MLQMAGQCSQNEYFDSLLHACIPCQLRCSSNTPPLTCQRYCNASVTNSVKGTNA. The stretch at 7-41 is one TNFR-Cys repeat; sequence QCSQNEYFDSLLHACIPCQLRCSSNTPPLTCQRYC. Disulfide bonds link cysteine 8-cysteine 21, cysteine 24-cysteine 37, and cysteine 28-cysteine 41. A helical; Signal-anchor for type III membrane protein membrane pass occupies residues 55–77; the sequence is ILWTCLGLSLIISLAVFVLMFLL. The Cytoplasmic segment spans residues 78–184; it reads RKINSEPLKD…TEIEKSISAR (107 aa).

As to quaternary structure, associates with TRAF1, TRAF2, TRAF3, TRAF5 and TRAF6. Expressed in mature B-cells, but not in T-cells or monocytes.

The protein localises to the cell membrane. It localises to the endomembrane system. Receptor for TNFSF13B/BLyS/BAFF and TNFSF13/APRIL. Promotes B-cell survival and plays a role in the regulation of humoral immunity. Activates NF-kappa-B and JNK. This Homo sapiens (Human) protein is Tumor necrosis factor receptor superfamily member 17 (TNFRSF17).